The primary structure comprises 577 residues: Cleavage stimulation factor subunit 2 (577 aa).

Serine 14 carries the post-translational modification Phosphoserine. The region spanning 16–94 is the RRM domain; it reads RSVFVGNIPY…RALRVDNAAS (79 aa). The tract at residues 108–248 is interactions with CSTF3 and SYMPK; the sequence is APVIESPYGE…VNGAPPLMQA (141 aa). Residue lysine 189 forms a Glycyl lysine isopeptide (Lys-Gly) (interchain with G-Cter in SUMO2) linkage. A disordered region spans residues 206-243; it reads QPVHGAGPGSGSNVSMNQQNPQAPQAQSLGGMHVNGAP. Over residues 222 to 232 the composition is skewed to low complexity; that stretch reads NQQNPQAPQAQ. Position 308 is an omega-N-methylarginine (arginine 308). The disordered stretch occupies residues 340 to 409; the sequence is EVEPRGYLGP…DGRGGRDPRG (70 aa). Over residues 360-373 the composition is skewed to basic and acidic residues; it reads PGHESRGPPPHELR. One copy of the 1; approximate repeat lies at 410-414; that stretch reads IDARG. Residues 410–469 are 12 X 5 AA tandem repeats of M-E-A-R-[AG]; it reads IDARGMEARAMEARGLDARGLEARAMEARAMEARAMEARAMEARAMEVRGMEARGMDTRG. 2 tandem repeats follow at residues 415–419 and 420–424. A 4; approximate repeat occupies 425-429; that stretch reads LDARG. A 5; approximate repeat occupies 430–434; that stretch reads LEARA. Repeat copies occupy residues 435-439, 440-444, 445-449, and 450-454. The stretch at 455 to 459 is one 10; approximate repeat; sequence MEVRG. Repeat 11 spans residues 460-464; the sequence is MEARG. Residues 465-469 form a 12; approximate repeat; that stretch reads MDTRG. 2 positions are modified to omega-N-methylarginine: arginine 468 and arginine 475. The disordered stretch occupies residues 508 to 532; sequence GMQGASIQGGSQPGGFSPGQNQVTP. The tract at residues 514-577 is interaction with RPO2TC1; sequence IQGGSQPGGF…EQIQKSTGAP (64 aa). A phosphoserine mark is found at serine 518 and serine 524.

As to quaternary structure, the CSTF complex is composed of CSTF1 (50 kDa subunit), CSTF2 (64 kDa subunit) and CSTF3 (77 kDa subunit). CSTF2 directly interacts with CSTF3, SYMPK and RPO2TC1. Interacts with HSF1 in heat-stressed cells. Interacts with CPSF2, CPSF3 and FIP1L1. Interacts with DDX1.

It localises to the nucleus. Its function is as follows. One of the multiple factors required for polyadenylation and 3'-end cleavage of mammalian pre-mRNAs. This subunit is directly involved in the binding to pre-mRNAs. The sequence is that of Cleavage stimulation factor subunit 2 (CSTF2) from Homo sapiens (Human).